A 275-amino-acid polypeptide reads, in one-letter code: D-apionate oxidoisomerase (275 aa).

NAD(+)-binding positions include 11 to 13 (GKM), glutamate 32, and aspartate 68. Residues histidine 113 and glutamate 183 each coordinate Zn(2+).

This sequence belongs to the ApnO family. Zn(2+) is required as a cofactor.

The enzyme catalyses D-apionate + NAD(+) = 3-oxoisoapionate + NADH + H(+). It functions in the pathway carbohydrate metabolism. Its function is as follows. Involved in catabolism of D-apiose. Catalyzes the conversion of D-apionate to 3-oxo-isoapionate. The polypeptide is D-apionate oxidoisomerase (Rhizobium rhizogenes (strain K84 / ATCC BAA-868) (Agrobacterium radiobacter)).